We begin with the raw amino-acid sequence, 181 residues long: Isopentenyl-diphosphate Delta-isomerase (181 aa).

Mn(2+)-binding residues include histidine 29 and histidine 36. One can recognise a Nudix hydrolase domain in the interval 34–167; it reads PLHLAFSCYL…GWAISPWAAE (134 aa). Residue cysteine 71 is part of the active site. Histidine 73 provides a ligand contact to Mn(2+). Glutamate 91 contributes to the Mg(2+) binding site. 2 residues coordinate Mn(2+): glutamate 118 and glutamate 120. Glutamate 120 is a catalytic residue.

This sequence belongs to the IPP isomerase type 1 family. It depends on Mg(2+) as a cofactor. The cofactor is Mn(2+).

It localises to the cytoplasm. It carries out the reaction isopentenyl diphosphate = dimethylallyl diphosphate. Its pathway is isoprenoid biosynthesis; dimethylallyl diphosphate biosynthesis; dimethylallyl diphosphate from isopentenyl diphosphate: step 1/1. Its function is as follows. Catalyzes the 1,3-allylic rearrangement of the homoallylic substrate isopentenyl (IPP) to its highly electrophilic allylic isomer, dimethylallyl diphosphate (DMAPP). The polypeptide is Isopentenyl-diphosphate Delta-isomerase (Mycolicibacterium vanbaalenii (strain DSM 7251 / JCM 13017 / BCRC 16820 / KCTC 9966 / NRRL B-24157 / PYR-1) (Mycobacterium vanbaalenii)).